A 164-amino-acid chain; its full sequence is MESVLKSLFVLLVATSFTLAKEIPAKVSKPQTLSRGWGDNLEWVQTYEEGLYKAKAENKPLMLINHRNDCPHSLALKKAFAEHQGIQKLAEEFILLNVVYDPTDKNLQLDGQYVPKIIFVDPSLVVRADLPGKYSNHQYTYEPADIDHLFENMKKALVLLKTEL.

An N-terminal signal peptide occupies residues Met-1–Ala-20. Short sequence motifs (homodimer stabilization; interchain) lie at residues Ser-34–Trp-43 and Glu-49–Ala-56.

The protein belongs to the AGR family. Monomer and homodimer.

The protein localises to the secreted. It localises to the endoplasmic reticulum. The chain is Anterior gradient protein 2-B (agr2-b) from Xenopus laevis (African clawed frog).